The chain runs to 626 residues: Chaperone protein HtpG (626 aa).

Residues 1 to 339 form an a; substrate-binding region; sequence MSTNQETRGF…SNDLPLNVSR (339 aa). Residues 340–555 form a b region; sequence EILQDNKVTA…NDQMTTQMAK (216 aa). The interval 556-626 is c; it reads LFAAAGQPVP…FIKRVNNLLG (71 aa).

It belongs to the heat shock protein 90 family. In terms of assembly, homodimer.

It is found in the cytoplasm. Functionally, molecular chaperone. Has ATPase activity. The protein is Chaperone protein HtpG of Histophilus somni (strain 2336) (Haemophilus somnus).